The sequence spans 384 residues: Putative glutamate--cysteine ligase 2 (384 aa).

This sequence belongs to the glutamate--cysteine ligase type 2 family. YbdK subfamily.

The catalysed reaction is L-cysteine + L-glutamate + ATP = gamma-L-glutamyl-L-cysteine + ADP + phosphate + H(+). Its function is as follows. ATP-dependent carboxylate-amine ligase which exhibits weak glutamate--cysteine ligase activity. This is Putative glutamate--cysteine ligase 2 from Dechloromonas aromatica (strain RCB).